Reading from the N-terminus, the 127-residue chain is MRFLLVAVVAMMALVSSSTAAVAETSNDINTMNNNQEFARSLRNTEERSIAAILAEAGEEDRAAWRINYRAWYKAKLTPTQVKTVLGVSQAEMNNVAKQLQRLYLGYYSFYTAMEKKKEEKKRLATP.

The N-terminal stretch at 1–20 (MRFLLVAVVAMMALVSSSTA) is a signal peptide. Residues 40–62 (RSLRNTEERSIAAILAEAGEEDR) carry the RxLR-dEER motif. A WY-domain region spans residues 72 to 107 (WYKAKLTPTQVKTVLGVSQAEMNNVAKQLQRLYLGY).

This sequence belongs to the RxLR effector family. As to quaternary structure, forms an unusual trans-homodimer. Interacts with host UBK.

It localises to the secreted. The protein resides in the host nucleus. Its subcellular location is the host nucleolus. Functionally, effector that suppresses flg22-induced post-translational MAP kinase activation in potato and tomato, but not in Arabidopsis. The perception of highly conserved pathogen- or microbe-associated molecular patterns (PAMPs/MAMPs), such as flg22, triggers converging signaling pathways recruiting MAP kinase cascades and inducing transcriptional re-programming, yielding a generic antimicrobial response. Does not suppress programmed cell death triggered by the P.infestans elicitin infestin-1 (INF1), or by co-expression of tomato Cf4 with Cladosporium fulvum Avr4. Suppresses early pattern-triggered immunity (PTI) via interaction with the U-box-kinase protein UBK, a positive regulator of specific PTI pathways in both potato and Nicotiana benthamiana. The sequence is that of RxLR effector protein SFI3 from Phytophthora infestans (strain T30-4) (Potato late blight agent).